The following is a 306-amino-acid chain: Non-specific ribonucleoside hydrolase RihC (306 aa).

The active site involves histidine 235.

It belongs to the IUNH family. RihC subfamily.

Hydrolyzes both purine and pyrimidine ribonucleosides with a broad-substrate specificity. The polypeptide is Non-specific ribonucleoside hydrolase RihC (Salmonella agona (strain SL483)).